The chain runs to 646 residues: EF-hand calcium-binding domain-containing protein 6 (646 aa).

EF-hand domains lie at 1–27, 28–63, 109–144, 214–249, 321–356, and 357–392; these read FLETDNEGNGILRRRDIKNALYGFDIP, LTPREFEKLWASYDTEGKGHITYQEFLQKLGVNYSP, DCYQDISKAFTKIDKSKTNYISICKMQKVLEECGCS, SSQLALSTAFSALDKEDTGFVKSTEFGQVLKDFCHK, SHYHAITQEFENFDTMKTNTISREEFRAVCNRNVQI, and LTDEQFDRLWNEMPVNAKGRLKYPDFLSRFSSERAA. At Thr-29 the chain carries Phosphothreonine. Residues 390–452 are disordered; that stretch reads RAATPTATGD…TTAIPGTPPL (63 aa). Residues 432–446 show a composition bias toward polar residues; the sequence is KPQSHPCTAASTTAI. Ser-435 is subject to Phosphoserine. Residues Thr-439 and Thr-449 each carry the phosphothreonine modification. Residues 448 to 646 form an interaction with PARK7 region; the sequence is GTPPLQNCDP…YNDFLRAFLQ (199 aa). EF-hand domains follow at residues 468 to 503, 504 to 539, 579 to 614, and 615 to 646; these read GCWRQLLKECKEKDVARQGDISASEFLALVEKFNLD, ISKEECQQLIIKYDLKNNGKFAYCDFIQSCVLLLKA, HCWRPMRRTFKSYDEAGTGLLSVADFRTVLRQYSIN, and LSEEEFFHILEYYDKTLSSNISYNDFLRAFLQ. Positions 552 to 646 are interaction with AR; sequence NAHKMKDSGA…YNDFLRAFLQ (95 aa).

In terms of assembly, microtubule inner protein component of sperm flagellar doublet microtubules. Binds PARK7. Part of a ternary complex containing PARK7, EFCAB6/DJBP and AR.

The protein localises to the nucleus. It localises to the cytoplasm. It is found in the cytoskeleton. Its subcellular location is the flagellum axoneme. Its function is as follows. Negatively regulates the androgen receptor by recruiting histone deacetylase complex, and protein DJ-1 antagonizes this inhibition by abrogation of this complex. Microtubule inner protein (MIP) part of the dynein-decorated doublet microtubules (DMTs) in cilia axoneme, which is required for motile cilia beating. This is EF-hand calcium-binding domain-containing protein 6 (EFCAB6) from Macaca fascicularis (Crab-eating macaque).